Consider the following 506-residue polypeptide: RNA-splicing ligase RtcB homolog (506 aa).

Mn(2+)-binding residues include Asp120, Cys123, His228, His260, and His354. 227–231 (NHYAE) contacts GMP. GMP is bound by residues 354–355 (HN), 403–406 (GGSM), Ser410, 429–432 (HGAG), and Lys505. The active-site GMP-histidine intermediate is His429.

The protein belongs to the RtcB family. Catalytic component of the tRNA-splicing ligase complex. It depends on Mn(2+) as a cofactor.

It carries out the reaction a 3'-end 3'-phospho-ribonucleotide-RNA + a 5'-end dephospho-ribonucleoside-RNA + GTP = a ribonucleotidyl-ribonucleotide-RNA + GMP + diphosphate. The catalysed reaction is a 3'-end 2',3'-cyclophospho-ribonucleotide-RNA + a 5'-end dephospho-ribonucleoside-RNA + GTP + H2O = a ribonucleotidyl-ribonucleotide-RNA + GMP + diphosphate + H(+). Its function is as follows. Catalytic subunit of the tRNA-splicing ligase complex that acts by directly joining spliced tRNA halves to mature-sized tRNAs by incorporating the precursor-derived splice junction phosphate into the mature tRNA as a canonical 3',5'-phosphodiester. May act as an RNA ligase with broad substrate specificity, and may function toward other RNAs. In Anopheles gambiae (African malaria mosquito), this protein is RNA-splicing ligase RtcB homolog.